The sequence spans 353 residues: Thiamine-phosphate synthase (353 aa).

Positions 1-128 are unknown; sequence MKSMPFAPIA…AASAAAIRYG (128 aa). Residues 129-353 form a thiamine-phosphate synthase region; that stretch reads LYDLEVTVLQ…TSLQLLEALR (225 aa). 4-amino-2-methyl-5-(diphosphooxymethyl)pyrimidine-binding positions include 185–189 and N217; that span reads QYRNK. Mg(2+) contacts are provided by D218 and D237. S256 provides a ligand contact to 4-amino-2-methyl-5-(diphosphooxymethyl)pyrimidine. Position 282-284 (282-284) interacts with 2-[(2R,5Z)-2-carboxy-4-methylthiazol-5(2H)-ylidene]ethyl phosphate; that stretch reads TAT. K285 contributes to the 4-amino-2-methyl-5-(diphosphooxymethyl)pyrimidine binding site. Residue G312 participates in 2-[(2R,5Z)-2-carboxy-4-methylthiazol-5(2H)-ylidene]ethyl phosphate binding.

This sequence belongs to the thiamine-phosphate synthase family. It depends on Mg(2+) as a cofactor.

It catalyses the reaction 2-[(2R,5Z)-2-carboxy-4-methylthiazol-5(2H)-ylidene]ethyl phosphate + 4-amino-2-methyl-5-(diphosphooxymethyl)pyrimidine + 2 H(+) = thiamine phosphate + CO2 + diphosphate. The enzyme catalyses 2-(2-carboxy-4-methylthiazol-5-yl)ethyl phosphate + 4-amino-2-methyl-5-(diphosphooxymethyl)pyrimidine + 2 H(+) = thiamine phosphate + CO2 + diphosphate. The catalysed reaction is 4-methyl-5-(2-phosphooxyethyl)-thiazole + 4-amino-2-methyl-5-(diphosphooxymethyl)pyrimidine + H(+) = thiamine phosphate + diphosphate. It functions in the pathway cofactor biosynthesis; thiamine diphosphate biosynthesis; thiamine phosphate from 4-amino-2-methyl-5-diphosphomethylpyrimidine and 4-methyl-5-(2-phosphoethyl)-thiazole: step 1/1. Its function is as follows. Condenses 4-methyl-5-(beta-hydroxyethyl)thiazole monophosphate (THZ-P) and 2-methyl-4-amino-5-hydroxymethyl pyrimidine pyrophosphate (HMP-PP) to form thiamine monophosphate (TMP). In Prochlorococcus marinus (strain MIT 9313), this protein is Thiamine-phosphate synthase.